We begin with the raw amino-acid sequence, 68 residues long: Glucagon-1 (68 aa).

The protein belongs to the glucagon family.

It is found in the secreted. In terms of biological role, promotes hydrolysis of glycogen and lipids, and raises the blood sugar level. The chain is Glucagon-1 (gcg) from Oncorhynchus kisutch (Coho salmon).